The sequence spans 85 residues: UPF0297 protein LGAS_0422 (85 aa).

It belongs to the UPF0297 family.

In Lactobacillus gasseri (strain ATCC 33323 / DSM 20243 / BCRC 14619 / CIP 102991 / JCM 1131 / KCTC 3163 / NCIMB 11718 / NCTC 13722 / AM63), this protein is UPF0297 protein LGAS_0422.